A 283-amino-acid polypeptide reads, in one-letter code: Bifunctional protein FolD (283 aa).

Position 166–168 (166–168) interacts with NADP(+); sequence GAS.

The protein belongs to the tetrahydrofolate dehydrogenase/cyclohydrolase family. In terms of assembly, homodimer.

The enzyme catalyses (6R)-5,10-methylene-5,6,7,8-tetrahydrofolate + NADP(+) = (6R)-5,10-methenyltetrahydrofolate + NADPH. It carries out the reaction (6R)-5,10-methenyltetrahydrofolate + H2O = (6R)-10-formyltetrahydrofolate + H(+). It participates in one-carbon metabolism; tetrahydrofolate interconversion. In terms of biological role, catalyzes the oxidation of 5,10-methylenetetrahydrofolate to 5,10-methenyltetrahydrofolate and then the hydrolysis of 5,10-methenyltetrahydrofolate to 10-formyltetrahydrofolate. This is Bifunctional protein FolD from Coxiella burnetii (strain CbuG_Q212) (Coxiella burnetii (strain Q212)).